The sequence spans 948 residues: Valine--tRNA ligase (948 aa).

A 'HIGH' region motif is present at residues 40-50 (PNVTGSLHMGH). The 'KMSKS' region signature appears at 551–555 (KMSKS). Position 554 (lysine 554) interacts with ATP. The stretch at 879-947 (LIDKGAELAR…LAEQHARISS (69 aa)) forms a coiled coil.

Belongs to the class-I aminoacyl-tRNA synthetase family. ValS type 1 subfamily. In terms of assembly, monomer.

It localises to the cytoplasm. It catalyses the reaction tRNA(Val) + L-valine + ATP = L-valyl-tRNA(Val) + AMP + diphosphate. Functionally, catalyzes the attachment of valine to tRNA(Val). As ValRS can inadvertently accommodate and process structurally similar amino acids such as threonine, to avoid such errors, it has a 'posttransfer' editing activity that hydrolyzes mischarged Thr-tRNA(Val) in a tRNA-dependent manner. The chain is Valine--tRNA ligase from Pseudomonas fluorescens (strain ATCC BAA-477 / NRRL B-23932 / Pf-5).